Reading from the N-terminus, the 117-residue chain is Large ribosomal subunit protein uL18 (117 aa).

The protein belongs to the universal ribosomal protein uL18 family. Part of the 50S ribosomal subunit; part of the 5S rRNA/L5/L18/L25 subcomplex. Contacts the 5S and 23S rRNAs.

In terms of biological role, this is one of the proteins that bind and probably mediate the attachment of the 5S RNA into the large ribosomal subunit, where it forms part of the central protuberance. The sequence is that of Large ribosomal subunit protein uL18 from Aliivibrio salmonicida (strain LFI1238) (Vibrio salmonicida (strain LFI1238)).